The sequence spans 181 residues: Protein GrpE (181 aa).

Positions methionine 1–alanine 13 are enriched in polar residues. The segment at methionine 1–glutamate 39 is disordered. Low complexity predominate over residues glutamine 21 to glutamate 39.

It belongs to the GrpE family. In terms of assembly, homodimer.

The protein resides in the cytoplasm. Functionally, participates actively in the response to hyperosmotic and heat shock by preventing the aggregation of stress-denatured proteins, in association with DnaK and GrpE. It is the nucleotide exchange factor for DnaK and may function as a thermosensor. Unfolded proteins bind initially to DnaJ; upon interaction with the DnaJ-bound protein, DnaK hydrolyzes its bound ATP, resulting in the formation of a stable complex. GrpE releases ADP from DnaK; ATP binding to DnaK triggers the release of the substrate protein, thus completing the reaction cycle. Several rounds of ATP-dependent interactions between DnaJ, DnaK and GrpE are required for fully efficient folding. This chain is Protein GrpE, found in Burkholderia lata (strain ATCC 17760 / DSM 23089 / LMG 22485 / NCIMB 9086 / R18194 / 383).